Consider the following 1309-residue polypeptide: Target of rapamycin complex 2 subunit ste20 (1309 aa).

The REM-1 domain occupies 24–110 (DFIKKMNTTD…IESFQGENGE (87 aa)). The tract at residues 105 to 128 (QGENGEAKTGSTSLTRSASATVSR) is disordered. A compositionally biased stretch (polar residues) spans 113 to 128 (TGSTSLTRSASATVSR). Serine 151 carries the post-translational modification Phosphoserine. Residues 183-205 (NVNEKNNSSSEDTQPNGKRPSSL) are disordered. The span at 194–205 (DTQPNGKRPSSL) shows a compositional bias: polar residues. Transmembrane regions (helical) follow at residues 285–305 (LFLDATAFSCCQMLNLPWILS), 392–412 (LIDGSISENLAASAALALVYL), 504–524 (VIDLFFLIFQVEYSSWSESFL), 564–584 (TAVLLFIFLELGLVESIVCMI), 926–946 (LNHWAISLLIFQLYDPCLEVC), and 984–1004 (LLLRFLATTVGFHYLSEINFI). Phosphothreonine is present on threonine 1203.

This sequence belongs to the RICTOR family. The target of rapamycin complex 2 (TORC2) is composed of at least bit61, pop3/wat1, sin1, ste20 and tor1. In terms of processing, either Ser-203 or Ser-204 are phosphorylated as well.

The protein localises to the membrane. Functionally, component of TORC2, which regulates multiple cellular processes to control cell growth in response to environmental signals. TORC2 is required for cell survival under various stress conditions. TORC2 positively controls G1 cell-cycle arrest, sexual development and amino acid uptake. Positively regulates amino acid uptake through the control of expression of amino acid permeases. This chain is Target of rapamycin complex 2 subunit ste20, found in Schizosaccharomyces pombe (strain 972 / ATCC 24843) (Fission yeast).